We begin with the raw amino-acid sequence, 537 residues long: MSNVSTSVTAQYQLNPAQNTGLVAAVRGSIVDLIFEQHVPPIHNVLYAQNKHVVLEVVAQLSAQKIRTIALTATQGLARGMPVEDSGGPLKVPVGPSTLSRMFNVFGAPIDGHTYQHDGKWRSVHQAPPALTKISSQLQIFETGIKIVDVLCPLERGGKAGLFGGAGVGKTVLLSEMIHNMVSQQQGVSIFCGIGERCREGEELYREMKEAGVLDNMVMLFGQMNEPPGSRFRIGHAALTMAEYFRDDEKKDVLLLIDNIFRFIQAGSEVSGLMGQMPSRMGYQPTLGTELAGLEERIANTEDGAVTSIQAVYVPADDFTDPAAVHTFSHLSATLVLSRKRASEGFYPAVDPLQSSSKLATPTVVGQRHYDVARQVKQILAQYNELKDIIAMLGLEQLSKKDRDVVSRARRLERFFTQPFFTTEQFTSMKGKFVSLEQALTGCERILQGEFDDYPESALYMIGEIDEAIKPKQSATEKNSSMNSDLKPSNSESNSPGPKNSEPDNAIPSSAKPNVSQPNTFKQDAQNESLEEPQNGR.

Glycine 164–threonine 171 provides a ligand contact to ATP. Residues proline 471–arginine 537 form a disordered region. 2 stretches are compositionally biased toward polar residues: residues glutamine 473–proline 498 and isoleucine 507–glutamate 528.

The protein belongs to the ATPase alpha/beta chains family. As to quaternary structure, F-type ATPases have 2 components, CF(1) - the catalytic core - and CF(0) - the membrane proton channel. CF(1) has five subunits: alpha(3), beta(3), gamma(1), delta(1), epsilon(1). CF(0) has three main subunits: a(1), b(2) and c(9-12). The alpha and beta chains form an alternating ring which encloses part of the gamma chain. CF(1) is attached to CF(0) by a central stalk formed by the gamma and epsilon chains, while a peripheral stalk is formed by the delta and b chains.

The protein resides in the cell inner membrane. It carries out the reaction ATP + H2O + 4 H(+)(in) = ADP + phosphate + 5 H(+)(out). Produces ATP from ADP in the presence of a proton gradient across the membrane. The catalytic sites are hosted primarily by the beta subunits. The chain is ATP synthase subunit beta 1 from Pseudoalteromonas atlantica (strain T6c / ATCC BAA-1087).